The chain runs to 356 residues: 3-isopropylmalate dehydrogenase (356 aa).

Arginine 91, arginine 101, arginine 129, and aspartate 223 together coordinate substrate. Residues aspartate 223, aspartate 247, and aspartate 251 each contribute to the Mg(2+) site. 281 to 293 (GSAPDIAGKGIAN) provides a ligand contact to NAD(+).

The protein belongs to the isocitrate and isopropylmalate dehydrogenases family. LeuB type 1 subfamily. In terms of assembly, homodimer. Mg(2+) serves as cofactor. The cofactor is Mn(2+).

It is found in the cytoplasm. The enzyme catalyses (2R,3S)-3-isopropylmalate + NAD(+) = 4-methyl-2-oxopentanoate + CO2 + NADH. Its pathway is amino-acid biosynthesis; L-leucine biosynthesis; L-leucine from 3-methyl-2-oxobutanoate: step 3/4. Catalyzes the oxidation of 3-carboxy-2-hydroxy-4-methylpentanoate (3-isopropylmalate) to 3-carboxy-4-methyl-2-oxopentanoate. The product decarboxylates to 4-methyl-2 oxopentanoate. The protein is 3-isopropylmalate dehydrogenase of Ralstonia nicotianae (strain ATCC BAA-1114 / GMI1000) (Ralstonia solanacearum).